The sequence spans 647 residues: MTKQEYEKAVDTLNAWAKAYYDEDEPLASDEEYDALYHAVLAFEQANPSEISLFSPTKRVGGGVKEGFSKASHIKRMWSMEDIFSLGELDAWLKRGEKENLTFVAEPKFDGASLNLLYENGVLVRAITRGDGVTGEDVTQNARTISSVPKSISYKGLIEIRGEVVIRKDDFELLNMERAKEGEAPLSNPRNAAAGSLRQLDSAVTAKRKLLFIPWGVGEQSLGLKDHSEVMKFVRDLGFERDDFFKILKKDELEAAYNELLANRDSKSVMMDGMVIRVNDLARCEQLGYTVKFPKFMVAFKFPAIEKVTRLKDVALQVGRSGVVTPVGVLDEVNIDGANVKSATLHNFDEIERLGVMKNDYIGIIRSGDVIPKITKVFKDRRDGSEQAIERPKFCPVCGSHLLDEGVFVKCQNLSCRARVVGSIIHYASKKCLNIDGLGDAIVNLLFDKGLIACIKDIYGLKFDDLMSLEGFKEKKVNNLLNAIEASKGAELSRFITGLGCEHIGEVAAKKLASSFGLDWLDASFEELTALEGFGVEMANSLIDFAEVNRDEILALSQIVQPSVTQVQSISNALSGKTVVITGTLSRPRDEIKAELESFGAKVSGSVSKKTDFVLAGEEAGSKLDKANELGVLVIDESEYERLKLEV.

Residues 30–34, 79–80, and Glu106 each bind NAD(+); these read DEEYD and SM. Catalysis depends on Lys108, which acts as the N6-AMP-lysine intermediate. NAD(+) contacts are provided by Arg129, Glu163, and Lys301. Positions 395, 398, 411, and 416 each coordinate Zn(2+). A BRCT domain is found at 569-647; sequence SISNALSGKT…SEYERLKLEV (79 aa).

Belongs to the NAD-dependent DNA ligase family. LigA subfamily. The cofactor is Mg(2+). Requires Mn(2+) as cofactor.

The catalysed reaction is NAD(+) + (deoxyribonucleotide)n-3'-hydroxyl + 5'-phospho-(deoxyribonucleotide)m = (deoxyribonucleotide)n+m + AMP + beta-nicotinamide D-nucleotide.. Its function is as follows. DNA ligase that catalyzes the formation of phosphodiester linkages between 5'-phosphoryl and 3'-hydroxyl groups in double-stranded DNA using NAD as a coenzyme and as the energy source for the reaction. It is essential for DNA replication and repair of damaged DNA. This Campylobacter concisus (strain 13826) protein is DNA ligase.